A 454-amino-acid polypeptide reads, in one-letter code: Bifunctional protein GlmU (454 aa).

A pyrophosphorylase region spans residues 1–228 (MSLKVIILAA…EMEVLGVNNK (228 aa)). UDP-N-acetyl-alpha-D-glucosamine contacts are provided by residues 8 to 11 (LAAG), K22, Q73, 78 to 79 (GT), 100 to 102 (YGD), G138, E153, N168, and N226. D102 is a binding site for Mg(2+). N226 provides a ligand contact to Mg(2+). The segment at 229 to 249 (SQLQSLERQYQAQLAEELMEQ) is linker. Residues 250–454 (GVTVLDASRI…IKGWQKPTKN (205 aa)) form an N-acetyltransferase region. UDP-N-acetyl-alpha-D-glucosamine contacts are provided by R332 and K350. The active-site Proton acceptor is the H362. UDP-N-acetyl-alpha-D-glucosamine contacts are provided by Y365 and N376. Acetyl-CoA is bound by residues A379, 385-386 (NY), S404, A422, and R439.

It in the N-terminal section; belongs to the N-acetylglucosamine-1-phosphate uridyltransferase family. The protein in the C-terminal section; belongs to the transferase hexapeptide repeat family. As to quaternary structure, homotrimer. Mg(2+) serves as cofactor.

It is found in the cytoplasm. The catalysed reaction is alpha-D-glucosamine 1-phosphate + acetyl-CoA = N-acetyl-alpha-D-glucosamine 1-phosphate + CoA + H(+). It catalyses the reaction N-acetyl-alpha-D-glucosamine 1-phosphate + UTP + H(+) = UDP-N-acetyl-alpha-D-glucosamine + diphosphate. Its pathway is nucleotide-sugar biosynthesis; UDP-N-acetyl-alpha-D-glucosamine biosynthesis; N-acetyl-alpha-D-glucosamine 1-phosphate from alpha-D-glucosamine 6-phosphate (route II): step 2/2. The protein operates within nucleotide-sugar biosynthesis; UDP-N-acetyl-alpha-D-glucosamine biosynthesis; UDP-N-acetyl-alpha-D-glucosamine from N-acetyl-alpha-D-glucosamine 1-phosphate: step 1/1. It functions in the pathway bacterial outer membrane biogenesis; LPS lipid A biosynthesis. Functionally, catalyzes the last two sequential reactions in the de novo biosynthetic pathway for UDP-N-acetylglucosamine (UDP-GlcNAc). The C-terminal domain catalyzes the transfer of acetyl group from acetyl coenzyme A to glucosamine-1-phosphate (GlcN-1-P) to produce N-acetylglucosamine-1-phosphate (GlcNAc-1-P), which is converted into UDP-GlcNAc by the transfer of uridine 5-monophosphate (from uridine 5-triphosphate), a reaction catalyzed by the N-terminal domain. The polypeptide is Bifunctional protein GlmU (Hydrogenovibrio crunogenus (strain DSM 25203 / XCL-2) (Thiomicrospira crunogena)).